The chain runs to 554 residues: Wee1-like protein kinase 2-B (554 aa).

2 disordered regions span residues 1 to 86 (MRMA…GGEC) and 145 to 182 (TLVNVNPFTPQSYRQTHFQPNGKRKERPEDDCSSDSQM). Position 38 is a phosphoserine (serine 38). Composition is skewed to polar residues over residues 38–48 (SPVSSWRTNNC) and 147–163 (VNVNPFTPQSYRQTHFQ). The Protein kinase domain maps to 213–487 (FLEIEKIGAG…AKNSVLRRCV (275 aa)). ATP-binding positions include 219-227 (IGAGEFGSV) and lysine 242. Aspartate 340 serves as the catalytic Proton acceptor. Mg(2+) contacts are provided by asparagine 345 and aspartate 377. The stretch at 490–516 (AAELQKQLNVEKFKTAMLERELQAAKL) forms a coiled coil.

It belongs to the protein kinase superfamily. Ser/Thr protein kinase family. WEE1 subfamily. As to quaternary structure, interacts with cdca3. Ubiquitinated and degraded at the onset of G2/M phase. Post-translationally, phosphorylated during M and G1 phases. Interacts with cdca3 when phosphorylated at Ser-38.

The protein localises to the nucleus. The enzyme catalyses L-tyrosyl-[protein] + ATP = O-phospho-L-tyrosyl-[protein] + ADP + H(+). Its function is as follows. Oocyte and early embryo-specific protein tyrosine kinase that phosphorylates and inhibits cdk1 and acts as a regulator of meiosis in oocytes. Required to ensure the meiotic cell cycle in oocytes by phosphorylating cdk1 at 'Tyr-15', leading to inhibit cdk1 activity and prevent meiosis. The chain is Wee1-like protein kinase 2-B (wee2-b) from Xenopus laevis (African clawed frog).